Here is a 204-residue protein sequence, read N- to C-terminus: Peptidyl-tRNA hydrolase 2 (204 aa).

TRNA is bound at residue Tyr37. His42 (proton acceptor) is an active-site residue. TRNA is bound by residues Phe86, Asn88, and Asn134.

It belongs to the PTH family. In terms of assembly, monomer.

The protein localises to the cytoplasm. The enzyme catalyses an N-acyl-L-alpha-aminoacyl-tRNA + H2O = an N-acyl-L-amino acid + a tRNA + H(+). Its function is as follows. Hydrolyzes ribosome-free peptidyl-tRNAs (with 1 or more amino acids incorporated), which drop off the ribosome during protein synthesis, or as a result of ribosome stalling. In terms of biological role, catalyzes the release of premature peptidyl moieties from peptidyl-tRNA molecules trapped in stalled 50S ribosomal subunits, and thus maintains levels of free tRNAs and 50S ribosomes. The sequence is that of Peptidyl-tRNA hydrolase 2 from Corynebacterium glutamicum (strain ATCC 13032 / DSM 20300 / JCM 1318 / BCRC 11384 / CCUG 27702 / LMG 3730 / NBRC 12168 / NCIMB 10025 / NRRL B-2784 / 534).